The sequence spans 39 residues: Potassium channel toxin alpha-KTx 31.1 (39 aa).

Disulfide bonds link Cys7–Cys30, Cys13–Cys35, and Cys17–Cys37.

This sequence belongs to the short scorpion toxin superfamily. Potassium channel inhibitor family. Alpha-KTx 31 subfamily. Expressed by the venom gland.

Its subcellular location is the secreted. Voltage-gated potassium channel inhibitor. 1 uM of the native toxin inhibits rat Kv1.2/KCNA2 (100% inhibition), and drosophila Shaker IR/Sh (100%), human Kv1.3/KCNA3 (83%), rat Kv1.1/KCNA1 (32%) and rat Kv1.6/KCNA6 (21%). This chain is Potassium channel toxin alpha-KTx 31.1, found in Buthus occitanus tunetanus (Common European scorpion).